We begin with the raw amino-acid sequence, 270 residues long: Formamidopyrimidine-DNA glycosylase (270 aa).

Pro-2 (schiff-base intermediate with DNA) is an active-site residue. Glu-3 serves as the catalytic Proton donor. The active-site Proton donor; for beta-elimination activity is Lys-58. Residues His-90 and Arg-109 each coordinate DNA. The FPG-type zinc finger occupies 237-270 (KVYGKEGEQCECGHTIERYTLGGRSTFLCSSCQK). Catalysis depends on Arg-260, which acts as the Proton donor; for delta-elimination activity.

Belongs to the FPG family. As to quaternary structure, monomer. It depends on Zn(2+) as a cofactor.

The catalysed reaction is Hydrolysis of DNA containing ring-opened 7-methylguanine residues, releasing 2,6-diamino-4-hydroxy-5-(N-methyl)formamidopyrimidine.. The enzyme catalyses 2'-deoxyribonucleotide-(2'-deoxyribose 5'-phosphate)-2'-deoxyribonucleotide-DNA = a 3'-end 2'-deoxyribonucleotide-(2,3-dehydro-2,3-deoxyribose 5'-phosphate)-DNA + a 5'-end 5'-phospho-2'-deoxyribonucleoside-DNA + H(+). Functionally, involved in base excision repair of DNA damaged by oxidation or by mutagenic agents. Acts as a DNA glycosylase that recognizes and removes damaged bases. Has a preference for oxidized purines, such as 7,8-dihydro-8-oxoguanine (8-oxoG). Has AP (apurinic/apyrimidinic) lyase activity and introduces nicks in the DNA strand. Cleaves the DNA backbone by beta-delta elimination to generate a single-strand break at the site of the removed base with both 3'- and 5'-phosphates. In Zymomonas mobilis subsp. mobilis (strain ATCC 31821 / ZM4 / CP4), this protein is Formamidopyrimidine-DNA glycosylase (mutM).